Reading from the N-terminus, the 241-residue chain is Probable pectate lyase D (241 aa).

The N-terminal stretch at 1-17 is a signal peptide; sequence MYQKSLLFSLLATSALA. N-linked (GlcNAc...) asparagine glycosylation occurs at asparagine 215. Positions 215 to 241 are disordered; it reads NNSGDEPEEVSEGPSDACQYSEPLSSC.

Belongs to the polysaccharide lyase 3 family. Ca(2+) is required as a cofactor.

The protein localises to the secreted. It catalyses the reaction Eliminative cleavage of (1-&gt;4)-alpha-D-galacturonan to give oligosaccharides with 4-deoxy-alpha-D-galact-4-enuronosyl groups at their non-reducing ends.. Its function is as follows. Pectinolytic enzyme consist of four classes of enzymes: pectin lyase, polygalacturonase, pectin methylesterase and rhamnogalacturonase. Among pectinolytic enzymes, pectin lyase is the most important in depolymerization of pectin, since it cleaves internal glycosidic bonds of highly methylated pectins. Favors pectate, the anion, over pectin, the methyl ester. The polypeptide is Probable pectate lyase D (plyD) (Neosartorya fischeri (strain ATCC 1020 / DSM 3700 / CBS 544.65 / FGSC A1164 / JCM 1740 / NRRL 181 / WB 181) (Aspergillus fischerianus)).